The chain runs to 151 residues: Salivary C-type lectin 2 (151 aa).

A signal peptide spans 1–15 (MKLLLSFALLGLVAC). In terms of domain architecture, C-type lectin spans 25-147 (YCFPNEVATW…CTSKRRFVCE (123 aa)). Cystine bridges form between Cys41-Cys146 and Cys118-Cys138.

It depends on Ca(2+) as a cofactor. In terms of tissue distribution, expressed in female salivary gland. Not detected or low-level expression in female midgut and fat body.

It is found in the secreted. In terms of biological role, salivary protein with carbohydrate-binding activity. Binds to D-mannose, D-galactose, D-glucose and maltose. Agglutinates host erythrocytes. Probably participates in mosquito innate immune responses to prevent microorganism multiplication in sugar and blood meals. Functionally, (Microbial infection) Binds to the surface of and agglutinates Escherichia coli in vitro. (Microbial infection) Binds to the surface of and agglutinates Pseudomonas aeruginosa in vitro. Its function is as follows. (Microbial infection) Binds to the surface of and agglutinates Bacillus subtilis in vitro. In terms of biological role, (Microbial infection) Agglutinates Staphylococcus aureus in vitro. Functionally, (Microbial infection) Agglutinates Candida albicans in vitro. (Microbial infection) Does not affect replication of dengue virus type 2 in host cells. The protein is Salivary C-type lectin 2 of Aedes albopictus (Asian tiger mosquito).